Consider the following 198-residue polypeptide: Dual specificity protein phosphatase 1 (198 aa).

The segment at 1-20 (MSSRDRGSPSSSSSSSSLPG) is disordered. Positions 8–17 (SPSSSSSSSS) are enriched in low complexity. Positions 26 to 47 (EKVKNQIQALVRVIKVARTYRD) are caM binding domain 1. The 142-residue stretch at 50 to 191 (VPSLIEQGLY…LQDLEKSMQV (142 aa)) folds into the Tyrosine-protein phosphatase domain. Cys135 acts as the Phosphocysteine intermediate in catalysis. The interval 151-180 (MKKHGMTLAQALQHVKSKRPVASPNAGFIR) is caM binding domain 2.

The protein belongs to the protein-tyrosine phosphatase family. Non-receptor class dual specificity subfamily. Interacts with calmodulin (CaM) in a calcium Ca(2+)-dependent manner. Expressed in roots, stems, leaves and flowers.

It is found in the nucleus. The protein localises to the cytoplasm. The catalysed reaction is O-phospho-L-tyrosyl-[protein] + H2O = L-tyrosyl-[protein] + phosphate. It carries out the reaction O-phospho-L-seryl-[protein] + H2O = L-seryl-[protein] + phosphate. The enzyme catalyses O-phospho-L-threonyl-[protein] + H2O = L-threonyl-[protein] + phosphate. Inhibited by sodium vanadate and sodium tungstate. NaF and spermifine repress specifically phosphoserine and phosphothreonine phosphatase activity. Functionally, has a dual specificity toward Ser/Thr and Tyr-containing proteins. Dephosphorylates MPK4 in vitro. In Arabidopsis thaliana (Mouse-ear cress), this protein is Dual specificity protein phosphatase 1 (DSPTP1).